Reading from the N-terminus, the 204-residue chain is Large ribosomal subunit protein uL4 (204 aa).

Residues 49-90 (KVKGMGEVSGTTKKPYRQKGTGSARQGSLRAPQYRTGGAVHG) are disordered.

It belongs to the universal ribosomal protein uL4 family. Part of the 50S ribosomal subunit.

In terms of biological role, one of the primary rRNA binding proteins, this protein initially binds near the 5'-end of the 23S rRNA. It is important during the early stages of 50S assembly. It makes multiple contacts with different domains of the 23S rRNA in the assembled 50S subunit and ribosome. Its function is as follows. Forms part of the polypeptide exit tunnel. This Gluconacetobacter diazotrophicus (strain ATCC 49037 / DSM 5601 / CCUG 37298 / CIP 103539 / LMG 7603 / PAl5) protein is Large ribosomal subunit protein uL4.